A 195-amino-acid chain; its full sequence is Xanthine phosphoribosyltransferase (195 aa).

2 residues coordinate xanthine: leucine 20 and asparagine 27. 128–132 contributes to the 5-phospho-alpha-D-ribose 1-diphosphate binding site; that stretch reads ANGQA. Lysine 156 provides a ligand contact to xanthine.

The protein belongs to the purine/pyrimidine phosphoribosyltransferase family. Xpt subfamily. As to quaternary structure, homodimer.

The protein localises to the cytoplasm. It carries out the reaction XMP + diphosphate = xanthine + 5-phospho-alpha-D-ribose 1-diphosphate. Its pathway is purine metabolism; XMP biosynthesis via salvage pathway; XMP from xanthine: step 1/1. In terms of biological role, converts the preformed base xanthine, a product of nucleic acid breakdown, to xanthosine 5'-monophosphate (XMP), so it can be reused for RNA or DNA synthesis. This chain is Xanthine phosphoribosyltransferase, found in Limosilactobacillus fermentum (strain NBRC 3956 / LMG 18251) (Lactobacillus fermentum).